The following is a 72-amino-acid chain: High-potential iron-sulfur protein isozyme 1 (72 aa).

At Ala-1 the chain carries N-carbamoylalanine; partial. [4Fe-4S] cluster contacts are provided by Cys-34, Cys-37, Cys-51, and Cys-65.

It belongs to the high-potential iron-sulfur protein (HiPIP) family. As to quaternary structure, homodimer.

Specific class of high-redox-potential 4Fe-4S ferredoxins. Functions in anaerobic electron transport in most purple and in some other photosynthetic bacteria and in at least one genus (Paracoccus) of halophilic, denitrifying bacteria. In Ectothiorhodospira mobilis, this protein is High-potential iron-sulfur protein isozyme 1.